Here is a 498-residue protein sequence, read N- to C-terminus: Lysine--tRNA ligase (498 aa).

Glu-408 and Glu-415 together coordinate Mg(2+).

It belongs to the class-II aminoacyl-tRNA synthetase family. As to quaternary structure, homodimer. Requires Mg(2+) as cofactor.

Its subcellular location is the cytoplasm. It catalyses the reaction tRNA(Lys) + L-lysine + ATP = L-lysyl-tRNA(Lys) + AMP + diphosphate. The sequence is that of Lysine--tRNA ligase from Listeria monocytogenes serovar 1/2a (strain ATCC BAA-679 / EGD-e).